The primary structure comprises 77 residues: Acyl carrier protein (77 aa).

Residues 1 to 76 form the Carrier domain; the sequence is MAVFDEVKDV…DVVNYIDGLK (76 aa). An O-(pantetheine 4'-phosphoryl)serine modification is found at S36.

Belongs to the acyl carrier protein (ACP) family. 4'-phosphopantetheine is transferred from CoA to a specific serine of apo-ACP by AcpS. This modification is essential for activity because fatty acids are bound in thioester linkage to the sulfhydryl of the prosthetic group.

The protein resides in the cytoplasm. It functions in the pathway lipid metabolism; fatty acid biosynthesis. Functionally, carrier of the growing fatty acid chain in fatty acid biosynthesis. This chain is Acyl carrier protein, found in Campylobacter fetus subsp. fetus (strain 82-40).